The sequence spans 231 residues: Flagellar L-ring protein (231 aa).

The signal sequence occupies residues 1-18 (MNRLLSLFALGGAVLLAG). Cys19 is lipidated: N-palmitoyl cysteine. The S-diacylglycerol cysteine moiety is linked to residue Cys19.

It belongs to the FlgH family. As to quaternary structure, the basal body constitutes a major portion of the flagellar organelle and consists of four rings (L,P,S, and M) mounted on a central rod.

Its subcellular location is the cell outer membrane. The protein localises to the bacterial flagellum basal body. Its function is as follows. Assembles around the rod to form the L-ring and probably protects the motor/basal body from shearing forces during rotation. This is Flagellar L-ring protein from Pseudomonas putida (strain W619).